A 170-amino-acid polypeptide reads, in one-letter code: uncharacterized protein (170 aa).

This is an uncharacterized protein from Ureaplasma parvum serovar 3 (strain ATCC 700970).